Reading from the N-terminus, the 4008-residue chain is Extracellular matrix organizing protein FRAS1 (4008 aa).

A signal peptide spans 1–26 (MGVLKVWLGLALALAEFAVLPHHSEG). VWFC domains follow at residues 27–88 (ACVY…PECV), 93–153 (GSCH…PVCV), 157–217 (KPCS…PQCS), 219–279 (RSCS…EECV), and 283–343 (GSCS…PECI). Residues 27–3901 (ACVYQDSLLA…AASLSQTGAS (3875 aa)) lie on the Extracellular side of the membrane. At serine 344 the chain carries Phosphoserine. One can recognise a VWFC 6 domain in the interval 347–417 (GYCVYEETGE…VKGQCCPDCT (71 aa)). Residue asparagine 361 is glycosylated (N-linked (GlcNAc...) asparagine). FU repeat units follow at residues 409–460 (KGQC…GFYQ), 462–505 (GSLC…GFYQ), 507–553 (RHSC…GFYN), 555–599 (QGTC…GYYA), 602–647 (TGRC…GFYS), 649–705 (HGVC…HFYL), 708–753 (TGIC…GYFH), 755–800 (EGSC…EQFL), 803–852 (VGYC…GYYA), 854–900 (RGAC…GHYL), 903–948 (NHVC…QYYL), 952–997 (TNTC…SFYQ), 999–1042 (SGLC…GYFA), and 1046–1089 (KHKC…GFSV). Residue asparagine 728 is glycosylated (N-linked (GlcNAc...) asparagine). N-linked (GlcNAc...) asparagine glycosylation is found at asparagine 1093 and asparagine 1108. CSPG repeat units follow at residues 1102–1197 (TPSL…LKIS), 1217–1308 (APYV…LQAN), 1329–1438 (GLQL…FEVS), 1463–1559 (APKV…FSFA), 1595–1689 (PVFQ…ISVT), 1710–1810 (GPRL…FSVS), and 1833–1936 (PPVI…FYVS). Asparagine 1504 is a glycosylation site (N-linked (GlcNAc...) asparagine). Asparagine 1777 carries N-linked (GlcNAc...) asparagine glycosylation. 2 N-linked (GlcNAc...) asparagine glycosylation sites follow: asparagine 1948 and asparagine 1978. 5 CSPG repeats span residues 1957–2057 (EPPR…FSLT), 2078–2177 (TPHL…FDVV), 2199–2291 (PPVI…FTLS), 2311–2404 (SLPV…FTVS), and 2439–2536 (TPRI…FLVK). Calx-beta domains follow at residues 2543-2646 (VSDN…VELS), 2659-2770 (AKVI…IALA), 2784-2890 (AKVL…VFLS), 2905-3007 (IAIN…VYLG), and 3025-3129 (ATIT…LVLG). N-linked (GlcNAc...) asparagine glycans are attached at residues asparagine 2563, asparagine 2664, and asparagine 2682. N-linked (GlcNAc...) asparagine glycosylation is found at asparagine 2908, asparagine 2985, asparagine 3070, asparagine 3218, asparagine 3676, and asparagine 3875. Residues 3902 to 3922 (IGSALAAIMLLLLVFLVACFI) traverse the membrane as a helical segment. The Cytoplasmic segment spans residues 3923 to 4008 (NRKCQKQRKK…HNNLQDGTEV (86 aa)).

The protein belongs to the FRAS1 family. In terms of tissue distribution, expressed in many adult tissues, with highest levels in kidney, pancreas and thalamus. Relatively high expression was also detected in fetal kidney and heart.

The protein localises to the cell membrane. Involved in extracellular matrix organization. Required for the regulation of epidermal-basement membrane adhesion responsible for proper organogenesis during embryonic development. Involved in brain organization and function. This chain is Extracellular matrix organizing protein FRAS1, found in Homo sapiens (Human).